The sequence spans 161 residues: Spermidine N(1)-acetyltransferase (161 aa).

The 158-residue stretch at 3-160 (IEIRKLSIED…SDFIMEKKYE (158 aa)) folds into the N-acetyltransferase domain. Residues 92–94 (LYL), 99–104 (THKKIG), N131, and S136 each bind acetyl-CoA. Y138 acts as the Proton donor in catalysis. K140 serves as a coordination point for acetyl-CoA.

It belongs to the acetyltransferase family. Monomer or homodimer.

It carries out the reaction an alkane-alpha,omega-diamine + acetyl-CoA = an N-acetylalkane-alpha,omega-diamine + CoA + H(+). Functionally, involved in the protection against polyamine toxicity by regulating their concentration. Could also be involved in the negative control of sporulation as well as production of degradative enzymes such as alpha-amylase, levansucrase and alkaline phosphatase. Catalyzes the transfer of an acetyl group from acetyl coenzyme A (AcCoA) to an acceptor substrate and release both CoA and the acetylated product. It can use a variety of substrates including spermidine, L-tryptophan, L-leucine, L-lysine, dopamine and tyramine. The polypeptide is Spermidine N(1)-acetyltransferase (Thermoplasma acidophilum (strain ATCC 25905 / DSM 1728 / JCM 9062 / NBRC 15155 / AMRC-C165)).